Consider the following 244-residue polypeptide: 6-carboxyhexanoate--CoA ligase (244 aa).

This sequence belongs to the BioW family. In terms of assembly, homodimer. Requires Mg(2+) as cofactor.

It carries out the reaction heptanedioate + ATP + CoA = 6-carboxyhexanoyl-CoA + AMP + diphosphate. Its pathway is metabolic intermediate metabolism; pimeloyl-CoA biosynthesis; pimeloyl-CoA from pimelate: step 1/1. Catalyzes the transformation of pimelate into pimeloyl-CoA with concomitant hydrolysis of ATP to AMP. This chain is 6-carboxyhexanoate--CoA ligase, found in Methanococcus maripaludis (strain DSM 14266 / JCM 13030 / NBRC 101832 / S2 / LL).